Here is a 391-residue protein sequence, read N- to C-terminus: Phosphoglycerate kinase (391 aa).

Substrate contacts are provided by residues 21-23 (DLN), arginine 36, 59-62 (HLGR), arginine 113, and arginine 146. ATP contacts are provided by residues lysine 197, glutamate 319, and 345-348 (GGDT).

It belongs to the phosphoglycerate kinase family. As to quaternary structure, monomer.

The protein resides in the cytoplasm. It carries out the reaction (2R)-3-phosphoglycerate + ATP = (2R)-3-phospho-glyceroyl phosphate + ADP. It participates in carbohydrate degradation; glycolysis; pyruvate from D-glyceraldehyde 3-phosphate: step 2/5. The sequence is that of Phosphoglycerate kinase from Xanthomonas campestris pv. campestris (strain 8004).